Consider the following 142-residue polypeptide: Large ribosomal subunit protein bL17 (142 aa).

It belongs to the bacterial ribosomal protein bL17 family. In terms of assembly, part of the 50S ribosomal subunit. Contacts protein L32.

The sequence is that of Large ribosomal subunit protein bL17 from Chlamydia muridarum (strain MoPn / Nigg).